Here is a 141-residue protein sequence, read N- to C-terminus: Large ribosomal subunit protein uL11c (141 aa).

The protein belongs to the universal ribosomal protein uL11 family. Part of the ribosomal stalk of the 50S ribosomal subunit. Interacts with L10 and the large rRNA to form the base of the stalk. L10 forms an elongated spine to which L12 dimers bind in a sequential fashion forming a multimeric L10(L12)X complex.

The protein localises to the plastid. It localises to the chloroplast. In terms of biological role, forms part of the ribosomal stalk which helps the ribosome interact with GTP-bound translation factors. This is Large ribosomal subunit protein uL11c from Cyanidium caldarium (Red alga).